The following is a 369-amino-acid chain: Tyrosine-protein phosphatase non-receptor type 5 (369 aa).

Serine 49 carries the post-translational modification Phosphoserine; by PKA. Position 59 is a phosphothreonine; by MAPK (threonine 59). Residue serine 72 is modified to Phosphoserine; by MAPK. In terms of domain architecture, Tyrosine-protein phosphatase spans 104-359; it reads LQAEFFEIPM…QFVHHAMSLY (256 aa). Substrate contacts are provided by residues aspartate 265, 300–306, and glutamine 344; that span reads CSAGIGR. Cysteine 300 acts as the Phosphocysteine intermediate in catalysis.

Belongs to the protein-tyrosine phosphatase family. Non-receptor class subfamily. In terms of processing, phosphorylation at Ser-49 by PKA deactivates PTPN5. Phosphorylation at Thr-59 and Ser-72 by MAPKs stabilizes the phosphatase, dephosphorylation of these sites results in ubiquitin-mediated degradation of the active phosphatase. As to expression, expressed in the central nervous system except in the cerebellum. Enriched within the striatum relative to other brain areas.

It localises to the cytoplasm. The catalysed reaction is O-phospho-L-tyrosyl-[protein] + H2O = L-tyrosyl-[protein] + phosphate. Functionally, may regulate the activity of several effector molecules involved in synaptic plasticity and neuronal cell survival, including MAPKs, Src family kinases and NMDA receptors. The polypeptide is Tyrosine-protein phosphatase non-receptor type 5 (Ptpn5) (Rattus norvegicus (Rat)).